Reading from the N-terminus, the 114-residue chain is UPF0145 protein TTHA1944 (114 aa).

Belongs to the UPF0145 family.

The chain is UPF0145 protein TTHA1944 from Thermus thermophilus (strain ATCC 27634 / DSM 579 / HB8).